Reading from the N-terminus, the 809-residue chain is Lon protease (809 aa).

The Lon N-terminal domain maps to 8-203 (LPVVALRNMA…RLCLILADEI (196 aa)). Residue 354 to 361 (GPPGTGKT) coordinates ATP. The Lon proteolytic domain occupies 629–809 (KDEVGIVCGL…MDEVLKHALV (181 aa)). Catalysis depends on residues Ser716 and Lys759.

It belongs to the peptidase S16 family. In terms of assembly, homohexamer. Organized in a ring with a central cavity.

Its subcellular location is the cytoplasm. The enzyme catalyses Hydrolysis of proteins in presence of ATP.. In terms of biological role, ATP-dependent serine protease that mediates the selective degradation of mutant and abnormal proteins as well as certain short-lived regulatory proteins. Required for cellular homeostasis and for survival from DNA damage and developmental changes induced by stress. Degrades polypeptides processively to yield small peptide fragments that are 5 to 10 amino acids long. Binds to DNA in a double-stranded, site-specific manner. The polypeptide is Lon protease (Lachnoclostridium phytofermentans (strain ATCC 700394 / DSM 18823 / ISDg) (Clostridium phytofermentans)).